Here is a 118-residue protein sequence, read N- to C-terminus: Myotrophin (118 aa).

Cys2 is modified (N-acetylcysteine). The stretch at 2-30 is one ANK 1 repeat; it reads CDKEFMWALKNGDLDEVKDYVAKGEDVNR. N6-acetyllysine is present on residues Lys4, Lys11, and Lys24. Thr31 is modified (phosphothreonine). 2 ANK repeats span residues 34–66 and 67–99; these read GGRKPLHYAADCGQLEILEFLLLKGADINAPDK and HHITPLLSAVYEGHVSCVKLLLSKGADKTVKGP.

This sequence belongs to the myotrophin family. In terms of assembly, interacts with RELA. Interacts with the heterodimer formed by CAPZA1 and CAPZB.

The protein resides in the cytoplasm. Its subcellular location is the nucleus. It localises to the perinuclear region. In terms of biological role, promotes dimerization of NF-kappa-B subunits and regulates NF-kappa-B transcription factor activity. Promotes growth of cardiomyocytes, but not cardiomyocyte proliferation. Promotes cardiac muscle hypertrophy. Plays a role in the regulation of the growth of actin filaments. Inhibits the activity of the F-actin-capping protein complex formed by the CAPZA1 and CAPZB heterodimer. This Bos taurus (Bovine) protein is Myotrophin (MTPN).